The following is a 644-amino-acid chain: NADH-ubiquinone oxidoreductase chain 5 (644 aa).

Helical transmembrane passes span 4–23 (FITLPLLNVIISGLLSRYIG), 30–49 (LNIINLFIILILLIYYYINI), 78–100 (DLLSITMLIPIILISLIVNIFAW), 112–129 (FYTYLALFTLFMIILVLG), 133–155 (LILFLGWEYIGIASFLLIGFWYN), 167–189 (LFINKIGDIFFIIALIYLIYIYK), 199–221 (LVSYINIDINNIIILCLVIAASA), 234–256 (WAMAGPTPVSVLLHAATLVIAGI), 271–293 (NILLFNLWLGAITSLISGLIAIN), 300–322 (IIALSTMSQLGIMFISIGLSSYN), 327–349 (HVLCHSLYKALLFICAGTIIHSL), 361–383 (GLLIYMPITYICMLIGSLSLMGL), 398–420 (SSIGIFTISGLIIYWLVVLSSLL), 466–488 (SWMAIICMIILSIGSLFIGYLLQ), 517–539 (INIYYKWIPIFNIFISILLIIYL), 546–568 (LLYIYNNPLFYNFYILFNTRFLF), 594–616 (GFLYTLGPNGLNYLLNLLSFNII), and 623–642 (FNHYLIYISFSLLLFIYLQF).

This sequence belongs to the complex I subunit 5 family.

The protein localises to the mitochondrion inner membrane. The catalysed reaction is a ubiquinone + NADH + 5 H(+)(in) = a ubiquinol + NAD(+) + 4 H(+)(out). In terms of biological role, core subunit of the mitochondrial membrane respiratory chain NADH dehydrogenase (Complex I) that is believed to belong to the minimal assembly required for catalysis. Complex I functions in the transfer of electrons from NADH to the respiratory chain. The immediate electron acceptor for the enzyme is believed to be ubiquinone. In Wickerhamomyces canadensis (Yeast), this protein is NADH-ubiquinone oxidoreductase chain 5 (ND5).